A 413-amino-acid polypeptide reads, in one-letter code: Probable cysteine desulfurase (413 aa).

Position 229 is an N6-(pyridoxal phosphate)lysine (K229). C368 acts as the Cysteine persulfide intermediate in catalysis.

It belongs to the class-V pyridoxal-phosphate-dependent aminotransferase family. Csd subfamily. Pyridoxal 5'-phosphate is required as a cofactor.

It carries out the reaction (sulfur carrier)-H + L-cysteine = (sulfur carrier)-SH + L-alanine. In terms of biological role, catalyzes the removal of elemental sulfur and selenium atoms from L-cysteine, L-cystine, L-selenocysteine, and L-selenocystine to produce L-alanine. The protein is Probable cysteine desulfurase (csd) of Staphylococcus aureus (strain COL).